Consider the following 406-residue polypeptide: tRNA-specific 2-thiouridylase MnmA (406 aa).

ATP-binding positions include 6–13 (AMSGGVDS) and Leu-32. The active-site Nucleophile is the Cys-101. Cys-101 and Cys-193 form a disulfide bridge. Position 125 (Gly-125) interacts with ATP. The interval 143 to 145 (KDQ) is interaction with tRNA. Cys-193 functions as the Cysteine persulfide intermediate in the catalytic mechanism. The tract at residues 378–406 (GAPIEEQPAPGTVGAVDADAIEQGEDAQR) is disordered. The span at 396 to 406 (DAIEQGEDAQR) shows a compositional bias: acidic residues.

Belongs to the MnmA/TRMU family.

The protein localises to the cytoplasm. The catalysed reaction is S-sulfanyl-L-cysteinyl-[protein] + uridine(34) in tRNA + AH2 + ATP = 2-thiouridine(34) in tRNA + L-cysteinyl-[protein] + A + AMP + diphosphate + H(+). In terms of biological role, catalyzes the 2-thiolation of uridine at the wobble position (U34) of tRNA, leading to the formation of s(2)U34. This is tRNA-specific 2-thiouridylase MnmA from Corynebacterium urealyticum (strain ATCC 43042 / DSM 7109).